Reading from the N-terminus, the 114-residue chain is Large ribosomal subunit protein bL19 (114 aa).

Belongs to the bacterial ribosomal protein bL19 family.

In terms of biological role, this protein is located at the 30S-50S ribosomal subunit interface and may play a role in the structure and function of the aminoacyl-tRNA binding site. The protein is Large ribosomal subunit protein bL19 of Acetivibrio thermocellus (strain ATCC 27405 / DSM 1237 / JCM 9322 / NBRC 103400 / NCIMB 10682 / NRRL B-4536 / VPI 7372) (Clostridium thermocellum).